The chain runs to 251 residues: Large ribosomal subunit protein uL3 (251 aa).

Gln-151 is subject to N5-methylglutamine. The disordered stretch occupies residues 221–251 (GLKQAANSNDSAAADTPAEVAAVEATEGQEG). Residues 225-251 (AANSNDSAAADTPAEVAAVEATEGQEG) are compositionally biased toward low complexity.

The protein belongs to the universal ribosomal protein uL3 family. In terms of assembly, part of the 50S ribosomal subunit. Forms a cluster with proteins L14 and L19. Methylated by PrmB.

Functionally, one of the primary rRNA binding proteins, it binds directly near the 3'-end of the 23S rRNA, where it nucleates assembly of the 50S subunit. The sequence is that of Large ribosomal subunit protein uL3 from Novosphingobium aromaticivorans (strain ATCC 700278 / DSM 12444 / CCUG 56034 / CIP 105152 / NBRC 16084 / F199).